Reading from the N-terminus, the 291-residue chain is Filament protein FIN1 (291 aa).

S54 bears the Phosphoserine mark. At T68 the chain carries Phosphothreonine. A phosphoserine mark is found at S74 and S88. Positions 254–284 form a coiled coil; sequence VELKEIKDLLLQMLRRQREIESRLSNIELQL.

Homooligomer; in vitro, FIN1 self-assembles into 10 nm diameter filaments. Interacts with the 14-3-3 proteins BMH1 and BMH2, and the protein phosphatase 1 complex catalytic subunit GLC7. In terms of processing, phosphorylated by CDC28. Phosphorylation is required for BMH1 and BMH2 interaction. Dephosphorylation by GLC7 depends on the presence of BMH1 and BMH2.

The protein resides in the nucleus. The protein localises to the cytoplasm. It is found in the cytoskeleton. It localises to the spindle pole. In terms of biological role, forms cell-cycle specific filaments between the spindle pole bodies of dividing yeast cells. The chain is Filament protein FIN1 (FIN1) from Saccharomyces cerevisiae (strain ATCC 204508 / S288c) (Baker's yeast).